The primary structure comprises 441 residues: Nucleoprotein (441 aa).

Serine 5 is modified (phosphoserine; by host). The region spanning 14–136 (VPLSLYAPLR…QLPSVVEIVE (123 aa)) is the CoV N NTD domain. The segment at 16–146 (LSLYAPLRVT…PNTPPASRAN (131 aa)) is RNA-binding. 2 disordered regions span residues 131 to 219 (VVEI…VTSR) and 231 to 278 (KSLG…LKDI). A Phosphoserine; by host modification is found at serine 143. Positions 143 to 215 (SRANSRSRSR…NRNQSNDRGG (73 aa)) are enriched in low complexity. 2 stretches are compositionally biased toward basic and acidic residues: residues 238-255 (NPDR…KSDN) and 269-278 (TSKERDLKDI). The 117-residue stretch at 266 to 382 (SRATSKERDL…AFKTGNAKLQ (117 aa)) folds into the CoV N CTD domain. Residues 277–379 (DIPEWRRIPK…QVDAFKTGNA (103 aa)) are dimerization.

Belongs to the alphacoronavirus nucleocapsid protein family. In terms of assembly, homooligomer. Both monomeric and oligomeric forms interact with RNA. Interacts with protein M. Interacts with NSP3; this interaction serves to tether the genome to the newly translated replicase-transcriptase complex at a very early stage of infection. Interacts with host RSAD2; this interaction inhibits viral replication. In terms of processing, ADP-ribosylated. The ADP-ribosylation is retained in the virion during infection. Phosphorylated on serine and threonine residues.

The protein resides in the virion. It is found in the host endoplasmic reticulum-Golgi intermediate compartment. It localises to the host Golgi apparatus. In terms of biological role, packages the positive strand viral genome RNA into a helical ribonucleocapsid (RNP) and plays a fundamental role during virion assembly through its interactions with the viral genome and membrane protein M. Plays an important role in enhancing the efficiency of subgenomic viral RNA transcription as well as viral replication. The chain is Nucleoprotein from Porcine epidemic diarrhea virus (strain CV777) (PEDV).